The sequence spans 436 residues: 3-ketoacyl-CoA thiolase (436 aa).

The active-site Acyl-thioester intermediate is C99. Active-site proton acceptor residues include H392 and C422.

This sequence belongs to the thiolase-like superfamily. Thiolase family. In terms of assembly, heterotetramer of two alpha chains (FadJ) and two beta chains (FadI).

It is found in the cytoplasm. It carries out the reaction an acyl-CoA + acetyl-CoA = a 3-oxoacyl-CoA + CoA. The protein operates within lipid metabolism; fatty acid beta-oxidation. Functionally, catalyzes the final step of fatty acid oxidation in which acetyl-CoA is released and the CoA ester of a fatty acid two carbons shorter is formed. The protein is 3-ketoacyl-CoA thiolase of Escherichia coli O9:H4 (strain HS).